A 386-amino-acid chain; its full sequence is Diaminopimelate decarboxylase (386 aa).

K46 bears the N6-(pyridoxal phosphate)lysine mark. Residues G214 and 246 to 249 contribute to the pyridoxal 5'-phosphate site; that span reads EIGR. Substrate contacts are provided by R249, R285, and Y289. Catalysis depends on C314, which acts as the Proton donor. 2 residues coordinate substrate: E315 and Y343. Y343 lines the pyridoxal 5'-phosphate pocket.

It belongs to the Orn/Lys/Arg decarboxylase class-II family. LysA subfamily. As to quaternary structure, homodimer. Requires pyridoxal 5'-phosphate as cofactor.

It catalyses the reaction meso-2,6-diaminopimelate + H(+) = L-lysine + CO2. It functions in the pathway amino-acid biosynthesis; L-lysine biosynthesis via DAP pathway; L-lysine from DL-2,6-diaminopimelate: step 1/1. In terms of biological role, specifically catalyzes the decarboxylation of meso-diaminopimelate (meso-DAP) to L-lysine. In Thermotoga maritima (strain ATCC 43589 / DSM 3109 / JCM 10099 / NBRC 100826 / MSB8), this protein is Diaminopimelate decarboxylase.